Consider the following 558-residue polypeptide: MAGPVLLFKEGTSRSSGRDALRNNILAAVTLAEMLKSSLGPRGLDKMLIDSFGDVTITNDGATIVKEMEIQHPAAKLLVEAAKAQDAEVGDGTTSAVVLAGLLLDKAEELLEQNVHPTIIIDGYKKALTKALEIIDQLSLKIDVNDLSSPTAKAQLKKIVSTTMSSKFIAGGAEEIDKIIDLVIDAITIVAEKRPDGTYNVPLDLIKIDKKKGGSIEDSILVHGLVLDKEVVHAGMPRRVEKAKIAVLDAALEVEKPEISAKISITSPEQIKSFLDEEARYLKEMVDKLASIGANVVICQKGIDDVAQHFLAKKGILAVRRVKRSDIEKLEKALGARIISSIKDATPEDLGYAELVEERRIGNDKMVFIEGAKNPRAVNILLRGSNDMALDEAERSLNDALHSLRNVLMKPMIVAGGGAVESELALRLREYARSVGGKEQLAIEKFAEALEEIPMILAETAGMEPIQALMDLRARHAKGLVNSGIDAVNGKIADDMMKINVIEPVRVKSQVLKSAVEAATAILKIDDLVAASALKTEKGKKEGGEGAGAETPGAPSLE.

Positions 536 to 558 (TEKGKKEGGEGAGAETPGAPSLE) are disordered. Residues 548-558 (GAETPGAPSLE) are compositionally biased toward low complexity.

Belongs to the TCP-1 chaperonin family. Forms a Heterooligomeric complex of two stacked eight-membered rings.

Functionally, molecular chaperone; binds unfolded polypeptides in vitro, and has a weak ATPase activity. This Sulfolobus acidocaldarius (strain ATCC 33909 / DSM 639 / JCM 8929 / NBRC 15157 / NCIMB 11770) protein is Thermosome subunit alpha (thsA).